A 187-amino-acid chain; its full sequence is Orotate phosphoribosyltransferase (187 aa).

Residues arginine 98, lysine 99, lysine 102, histidine 104, and 128–136 each bind 5-phospho-alpha-D-ribose 1-diphosphate; that span reads EDVTTTGGS. Orotate is bound by residues threonine 132 and arginine 160.

Belongs to the purine/pyrimidine phosphoribosyltransferase family. PyrE subfamily. In terms of assembly, homodimer. Mg(2+) serves as cofactor.

It carries out the reaction orotidine 5'-phosphate + diphosphate = orotate + 5-phospho-alpha-D-ribose 1-diphosphate. Its pathway is pyrimidine metabolism; UMP biosynthesis via de novo pathway; UMP from orotate: step 1/2. In terms of biological role, catalyzes the transfer of a ribosyl phosphate group from 5-phosphoribose 1-diphosphate to orotate, leading to the formation of orotidine monophosphate (OMP). The sequence is that of Orotate phosphoribosyltransferase from Rhodopseudomonas palustris (strain TIE-1).